Here is a 23-residue protein sequence, read N- to C-terminus: Acidic phospholipase A2 Ts-A2 (23 aa).

Ca(2+) is required as a cofactor. Post-translationally, contains 7 disulfide bonds. In terms of tissue distribution, expressed by the venom gland.

It is found in the secreted. It carries out the reaction a 1,2-diacyl-sn-glycero-3-phosphocholine + H2O = a 1-acyl-sn-glycero-3-phosphocholine + a fatty acid + H(+). Functionally, exhibits moderate hydrolytic activities and prefers the anionic micelles (dPPC with deoxycholate) to the zwitterionic micelles (dPPC with Triton X-100). PLA2 catalyzes the calcium-dependent hydrolysis of the 2-acyl groups in 3-sn-phosphoglycerides. The polypeptide is Acidic phospholipase A2 Ts-A2 (Trimeresurus stejnegeri (Chinese green tree viper)).